A 381-amino-acid chain; its full sequence is Heme A synthase (381 aa).

Transmembrane regions (helical) follow at residues 25 to 45 (GAVR…VAVG), 112 to 132 (LLGR…WWRG), 138 to 158 (LLLG…IGWI), 176 to 196 (LALH…LAAG), and 212 to 232 (VAGL…LVAG). His-277 lines the heme pocket. A run of 3 helical transmembrane segments spans residues 279–299 (LFAY…VRMA), 307–327 (AMGV…TLLL), and 329–349 (VPLW…IMAT). His-337 is a heme binding site.

This sequence belongs to the COX15/CtaA family. Type 2 subfamily. As to quaternary structure, interacts with CtaB. Requires heme b as cofactor.

It is found in the cell membrane. It catalyses the reaction Fe(II)-heme o + 2 A + H2O = Fe(II)-heme a + 2 AH2. It functions in the pathway porphyrin-containing compound metabolism; heme A biosynthesis; heme A from heme O: step 1/1. Its function is as follows. Catalyzes the conversion of heme O to heme A by two successive hydroxylations of the methyl group at C8. The first hydroxylation forms heme I, the second hydroxylation results in an unstable dihydroxymethyl group, which spontaneously dehydrates, resulting in the formyl group of heme A. The sequence is that of Heme A synthase from Methylorubrum populi (strain ATCC BAA-705 / NCIMB 13946 / BJ001) (Methylobacterium populi).